The sequence spans 852 residues: Beta-galactosidase 8 (852 aa).

Positions 1-29 are cleaved as a signal peptide; the sequence is MEIAAKMVKVRKMEMILLLILVIVVAATA. N31 is a glycosylation site (N-linked (GlcNAc...) asparagine). E188 functions as the Proton donor in the catalytic mechanism. E257 functions as the Nucleophile in the catalytic mechanism. N-linked (GlcNAc...) asparagine glycosylation is found at N258, N475, N766, and N807. The 87-residue stretch at 766–852 folds into the SUEL-type lectin domain; that stretch reads NRTRPVLSLK…KSLAVEASCS (87 aa).

It belongs to the glycosyl hydrolase 35 family. In terms of tissue distribution, expressed in roots, flowers and siliques.

It is found in the secreted. It localises to the extracellular space. The protein resides in the apoplast. It catalyses the reaction Hydrolysis of terminal non-reducing beta-D-galactose residues in beta-D-galactosides.. This chain is Beta-galactosidase 8 (BGAL8), found in Arabidopsis thaliana (Mouse-ear cress).